The primary structure comprises 218 residues: GTP cyclohydrolase 1 (218 aa).

Residues cysteine 109, histidine 112, and cysteine 180 each coordinate Zn(2+).

This sequence belongs to the GTP cyclohydrolase I family. As to quaternary structure, toroid-shaped homodecamer, composed of two pentamers of five dimers.

The catalysed reaction is GTP + H2O = 7,8-dihydroneopterin 3'-triphosphate + formate + H(+). It participates in cofactor biosynthesis; 7,8-dihydroneopterin triphosphate biosynthesis; 7,8-dihydroneopterin triphosphate from GTP: step 1/1. The polypeptide is GTP cyclohydrolase 1 (Mannheimia succiniciproducens (strain KCTC 0769BP / MBEL55E)).